The following is an 819-amino-acid chain: MEDGEIEEGMVTADEFPTPEVTTIETIQPPREPGKSPLELLRESKTSVEEIVAKMLSMKKQGNHKSEIRELLTQMFLNFVNLRQANRAILTEEDKVKAETERAKAPVDFTTLQLHNLMYEKSHYVKAIKACRDFKSKYPDIDLVPEQDFFRHAPEAIKDQSLSSDSSHVLMPKRLNFELHQRKELCKHRARLEQQKKSLLETIAERKKFLSSLPLHLKSLKKASLPVQNHLGIQHTKKLKQHNLAELLPPPLYVLYSQLLAQKEAFEESIELEVVGSLKDAQAYARQQSRKDSGMSSNTESSRLEDDGPDDDDDGQRRRKRPKKLTSKEGSDKAGLYQVHPLKIVLHIYDDEIPDTKSLKLVILKFEYLLKLNVVCVGAEGSQDGPEKNIFCNLFPDDAGLEPPHQSTKLILGDGQTFDENRTSRPYKWVQHLAGIDISPVLLGQEAHNTDPAKSDTFVPDLSLYRQQHRVQTVLRRIRLRKKAHLALAEQLDLLMKHELPVVNCEDAPWALHKVLCALDSWLHIQSSASKSCSLTLNSVEQVPEPMEIDVDGRSISGKEDFESIREDGELPSLVTAAASLTSSNHTPSKVSNQARSRQLALMTKNLDSPISKGKSPSFKKYEDDLDLVLDDDSEIDEPTGRTEAHVEELCPEKADNSWVDYGSREFALVFSRKTDGGKLWKLEAMVQISMEYPLRPPLFSLSLHASSSSGNENGTNESDHYNELRAMEAEVNLHMLKIIPSDQENYLLSHQIRCLAMLFDYYVDDPSPDSKRGTATTVVDVGLCKPVDGKLLVRSFRGRDHRKMISWKGRGCASGYPC.

Residues Ala285 to Asp332 are disordered.

Belongs to the THOC5 family. As to quaternary structure, component of the THO complex, which is composed of THO1, THO2, THO3, THO5, THO6 and THO7.

The protein resides in the nucleus. Acts as a component of the THO subcomplex of the TREX complex which is thought to couple mRNA transcription, processing and nuclear export. The protein is THO complex subunit 5B (THO5B) of Arabidopsis thaliana (Mouse-ear cress).